Here is a 56-residue protein sequence, read N- to C-terminus: Large ribosomal subunit protein bL32 (56 aa).

Residues 1–34 (MAVQQNKPTRSKRGMRRSHDALTTSTVSVDKASG) are disordered.

It belongs to the bacterial ribosomal protein bL32 family.

In Sodalis glossinidius (strain morsitans), this protein is Large ribosomal subunit protein bL32.